We begin with the raw amino-acid sequence, 730 residues long: Ribosomal RNA large subunit methyltransferase K/L (730 aa).

A THUMP domain is found at 46 to 157 (TAYRLCVWSR…RGEAILSLDL (112 aa)). The segment at 395 to 418 (ERREAQPEGTEVRQQAPQASEPAR) is disordered.

The protein belongs to the methyltransferase superfamily. RlmKL family.

The protein resides in the cytoplasm. The catalysed reaction is guanosine(2445) in 23S rRNA + S-adenosyl-L-methionine = N(2)-methylguanosine(2445) in 23S rRNA + S-adenosyl-L-homocysteine + H(+). It catalyses the reaction guanosine(2069) in 23S rRNA + S-adenosyl-L-methionine = N(2)-methylguanosine(2069) in 23S rRNA + S-adenosyl-L-homocysteine + H(+). Functionally, specifically methylates the guanine in position 2445 (m2G2445) and the guanine in position 2069 (m7G2069) of 23S rRNA. In Pseudomonas putida (strain GB-1), this protein is Ribosomal RNA large subunit methyltransferase K/L.